Consider the following 90-residue polypeptide: Small ribosomal subunit protein bS16 (90 aa).

Belongs to the bacterial ribosomal protein bS16 family. As to quaternary structure, part of the 30S ribosomal subunit.

The protein is Small ribosomal subunit protein bS16 of Bacillus subtilis (strain 168).